We begin with the raw amino-acid sequence, 244 residues long: Small ribosomal subunit protein uS3 (244 aa).

A KH type-2 domain is found at 39–110 (IRDYVRKNLS…QIRINVIEVE (72 aa)). The interval 215–244 (EDAAPSNVGQPRRRNQQRRRQQFEDRSNEG) is disordered. Residues 225-234 (PRRRNQQRRR) are compositionally biased toward basic residues. Positions 235–244 (QQFEDRSNEG) are enriched in basic and acidic residues.

Belongs to the universal ribosomal protein uS3 family. In terms of assembly, part of the 30S ribosomal subunit. Forms a tight complex with proteins S10 and S14.

Binds the lower part of the 30S subunit head. Binds mRNA in the 70S ribosome, positioning it for translation. This chain is Small ribosomal subunit protein uS3, found in Synechococcus sp. (strain ATCC 27144 / PCC 6301 / SAUG 1402/1) (Anacystis nidulans).